The primary structure comprises 110 residues: Insulin (110 aa).

An N-terminal signal peptide occupies residues 1-24 (MASLAALLPLLALLVLCRLDPAQA). 3 disulfides stabilise this stretch: Cys31/Cys96, Cys43/Cys109, and Cys95/Cys100. Positions 57–87 (EVEELQVGQAELGGGPGAGGLQPSALELALQ) are cleaved as a propeptide — c peptide.

Belongs to the insulin family. In terms of assembly, heterodimer of a B chain and an A chain linked by two disulfide bonds.

The protein localises to the secreted. Insulin decreases blood glucose concentration. It increases cell permeability to monosaccharides, amino acids and fatty acids. It accelerates glycolysis, the pentose phosphate cycle, and glycogen synthesis in liver. The polypeptide is Insulin (INS) (Oryctolagus cuniculus (Rabbit)).